A 324-amino-acid chain; its full sequence is Deoxyhypusine hydroxylase (324 aa).

HEAT-like PBS-type repeat units follow at residues 60–86 (LKHE…VLED) and 94–119 (RHEA…YLHR). His62, Glu63, His95, and Glu96 together coordinate Fe cation. Residues 143 to 152 (EERKQEKLRQ) show a composition bias toward basic and acidic residues. The disordered stretch occupies residues 143–171 (EERKQEKLRQSDFASVDPAPPMPEDDEKQ). HEAT-like PBS-type repeat units lie at residues 189 to 219 (KRYR…LAKG), 227 to 253 (FRHE…ALSN), and 260 to 287 (VRHE…FLHD). Fe cation is bound by residues His229, Glu230, His262, and Glu263.

It belongs to the deoxyhypusine hydroxylase family. It depends on Fe(2+) as a cofactor.

The protein resides in the cytoplasm. The protein localises to the nucleus. It carries out the reaction [eIF5A protein]-deoxyhypusine + AH2 + O2 = [eIF5A protein]-hypusine + A + H2O. It functions in the pathway protein modification; eIF5A hypusination. In terms of biological role, catalyzes the hydroxylation of the N(6)-(4-aminobutyl)-L-lysine intermediate to form hypusine, an essential post-translational modification only found in mature eIF-5A factor. The polypeptide is Deoxyhypusine hydroxylase (lia1) (Neurospora crassa (strain ATCC 24698 / 74-OR23-1A / CBS 708.71 / DSM 1257 / FGSC 987)).